A 198-amino-acid polypeptide reads, in one-letter code: Ribonuclease HII (198 aa).

The RNase H type-2 domain occupies 10 to 198 (QLVAGVDEVG…PVKRALGLAS (189 aa)). Residues D16, E17, and D108 each contribute to the a divalent metal cation site.

The protein belongs to the RNase HII family. The cofactor is Mn(2+). Requires Mg(2+) as cofactor.

The protein localises to the cytoplasm. The enzyme catalyses Endonucleolytic cleavage to 5'-phosphomonoester.. Endonuclease that specifically degrades the RNA of RNA-DNA hybrids. This chain is Ribonuclease HII, found in Escherichia fergusonii (strain ATCC 35469 / DSM 13698 / CCUG 18766 / IAM 14443 / JCM 21226 / LMG 7866 / NBRC 102419 / NCTC 12128 / CDC 0568-73).